A 373-amino-acid chain; its full sequence is Alcohol dehydrogenase class-3 (373 aa).

Ala1 is modified (N-acetylalanine). 7 residues coordinate Zn(2+): Cys44, His66, Cys96, Cys99, Cys102, Cys110, and Cys173.

The protein belongs to the zinc-containing alcohol dehydrogenase family. Class-III subfamily. In terms of assembly, homodimer. Zn(2+) serves as cofactor.

The protein resides in the cytoplasm. The catalysed reaction is a primary alcohol + NAD(+) = an aldehyde + NADH + H(+). The enzyme catalyses a secondary alcohol + NAD(+) = a ketone + NADH + H(+). It carries out the reaction S-(hydroxymethyl)glutathione + NADP(+) = S-formylglutathione + NADPH + H(+). It catalyses the reaction S-(hydroxymethyl)glutathione + NAD(+) = S-formylglutathione + NADH + H(+). The catalysed reaction is S-nitrosoglutathione + NADH + H(+) = S-(hydroxysulfenamide)glutathione + NAD(+). Its function is as follows. Class-III ADH is remarkably ineffective in oxidizing ethanol, but it readily catalyzes the oxidation of long-chain primary alcohols and the oxidation of S-(hydroxymethyl) glutathione. Also acts as a S-nitroso-glutathione reductase by catalyzing the NADH-dependent reduction of S-nitrosoglutathione, thereby regulating protein S-nitrosylation. This chain is Alcohol dehydrogenase class-3, found in Saara hardwickii (Indian spiny-tailed lizard).